A 140-amino-acid polypeptide reads, in one-letter code: Protein archease (140 aa).

Residues Asp12, Asp139, and Leu140 each contribute to the Ca(2+) site.

Belongs to the archease family.

Functionally, activates the tRNA-splicing ligase complex by facilitating the enzymatic turnover of catalytic subunit RtcB. Acts by promoting the guanylylation of RtcB, a key intermediate step in tRNA ligation. Can also alter the NTP specificity of RtcB such that ATP, dGTP or ITP is used efficiently. May also act as a chaperone or modulator of proteins involved in DNA or RNA processing. The sequence is that of Protein archease from Methanothermobacter thermautotrophicus (strain ATCC 29096 / DSM 1053 / JCM 10044 / NBRC 100330 / Delta H) (Methanobacterium thermoautotrophicum).